Reading from the N-terminus, the 127-residue chain is Cyclin-dependent protein kinase inhibitor SIM (127 aa).

The segment at 21 to 71 (RANTNRDDDGGGCTTPTSSDHKIPPTTATTPPPPPQKPRPPSTPSSLGIRS) is disordered. Over residues 50–63 (TPPPPPQKPRPPST) the composition is skewed to pro residues.

Interacts with CDKA-1. Interacts with CYCD2-1, CYCD3-2 and CYCD4-1. Interacts with CDKB1-1. Interacts with CPR5. As to expression, expressed in the shoot apical meristem, leaf primordia and the elongation zone of the root.

The protein resides in the nucleus. Its function is as follows. Cyclin-dependent protein kinase (CDK) inhibitor that functions as a repressor of mitosis in the endoreduplication cell cycle. Inhibits the kinase activity of CYCD3-1/CDKA-1, CYCD2-1/CDKA-1 and CYCB1-1/CDKB1-1 complexes in a dose dependent manner. Cooperates with SMR1 and SMR2 to promote endoreplication during leaf development. Required for normal trichome endoreplicating cell cycles. Positive regulator of effector-triggered immunity (ETI). This Arabidopsis thaliana (Mouse-ear cress) protein is Cyclin-dependent protein kinase inhibitor SIM.